Consider the following 82-residue polypeptide: UPF0235 protein Pden_2174 (82 aa).

This sequence belongs to the UPF0235 family.

The chain is UPF0235 protein Pden_2174 from Paracoccus denitrificans (strain Pd 1222).